The following is a 703-amino-acid chain: UvrABC system protein B (703 aa).

Residues 33-419 (ERIENGENDV…SDGVVEQIIR (387 aa)) form the Helicase ATP-binding domain. 46–53 (GATGTGKT) provides a ligand contact to ATP. The Beta-hairpin signature appears at 99–122 (YYDYYQPEAYIPQTDTYIEKDSNI). The 154-residue stretch at 436-589 (QIDDLLAEIK…QIAYNQEHGI (154 aa)) folds into the Helicase C-terminal domain. A UVR domain is found at 659-694 (ADLIRQLSEQMHTAAEQLQFELAARLRDEIRDLKKE).

This sequence belongs to the UvrB family. As to quaternary structure, forms a heterotetramer with UvrA during the search for lesions. Interacts with UvrC in an incision complex.

Its subcellular location is the cytoplasm. In terms of biological role, the UvrABC repair system catalyzes the recognition and processing of DNA lesions. A damage recognition complex composed of 2 UvrA and 2 UvrB subunits scans DNA for abnormalities. Upon binding of the UvrA(2)B(2) complex to a putative damaged site, the DNA wraps around one UvrB monomer. DNA wrap is dependent on ATP binding by UvrB and probably causes local melting of the DNA helix, facilitating insertion of UvrB beta-hairpin between the DNA strands. Then UvrB probes one DNA strand for the presence of a lesion. If a lesion is found the UvrA subunits dissociate and the UvrB-DNA preincision complex is formed. This complex is subsequently bound by UvrC and the second UvrB is released. If no lesion is found, the DNA wraps around the other UvrB subunit that will check the other stand for damage. The chain is UvrABC system protein B from Bifidobacterium longum (strain NCC 2705).